Here is a 361-residue protein sequence, read N- to C-terminus: Prostaglandin D2 receptor (361 aa).

The Extracellular segment spans residues 1–21 (MRPLFYRCHNTTSVEKGNSAT). Asn-10 carries N-linked (GlcNAc...) asparagine glycosylation. Residues 22–42 (MGGVLFSTGLVGNLLALGLLA) traverse the membrane as a helical segment. The Cytoplasmic portion of the chain corresponds to 43–58 (RSGLGSCPPRSPRPPP). A helical transmembrane segment spans residues 59 to 79 (SVFYVLVFGLTITDLLGKCLV). Topologically, residues 80–107 (SPFVLSAYAQNRSLRELVPGSDSSLCQA) are extracellular. The N-linked (GlcNAc...) asparagine glycan is linked to Asn-90. Cys-105 and Cys-183 are oxidised to a cystine. A helical transmembrane segment spans residues 108-128 (FAFIMSFFGLASTLQLLAMAL). Residues 129–150 (ECWLSLGHPFFHRRHLTPRRGA) are Cytoplasmic-facing. A helical membrane pass occupies residues 151–171 (MVAPVVGAFCLAFCALPLVGF). Over 172 to 195 (GKFVQYCPGTWCFFQMVHEERSLS) the chain is Extracellular. A helical membrane pass occupies residues 196 to 216 (VLSYSVLYASLMLLLVLAIVL). Residues 217-262 (CNLSAMRNLYAMHLRLRGLLRPGSRERAEPGAGEREATPLHLEELD) lie on the Cytoplasmic side of the membrane. Residues 263–283 (HLLLLALMTVLFTMCSLPLIY) traverse the membrane as a helical segment. Residues 284-310 (RAYYGAFKAVPEQNGTTEETEDLRALR) are Extracellular-facing. N-linked (GlcNAc...) asparagine glycosylation occurs at Asn-297. The helical transmembrane segment at 311–331 (FLSVISIVDPWIFIIFRTSVF) threads the bilayer. At 332 to 361 (RMFFRKIFIRPLIYRNWHSNSCQTNMESSL) the chain is on the cytoplasmic side.

This sequence belongs to the G-protein coupled receptor 1 family.

It localises to the cell membrane. Functionally, receptor for prostaglandin D2 (PGD2). The activity of this receptor is mainly mediated by G(s) proteins that stimulate adenylate cyclase, resulting in an elevation of intracellular cAMP. A mobilization of calcium is also observed, but without formation of inositol 1,4,5-trisphosphate. Involved in PLA2G3-dependent maturation of mast cells. PLA2G3 is secreted by immature mast cells and acts on nearby fibroblasts upstream to PTDGS to synthesize PGD2, which in turn promotes mast cell maturation and degranulation via PTGDR. In Bos taurus (Bovine), this protein is Prostaglandin D2 receptor (PTGDR).